A 342-amino-acid polypeptide reads, in one-letter code: Hypoxia responsive morphology factor C (342 aa).

The Bipartite nuclear localization signal motif lies at 46 to 68 (RMKIPRRKSEYSSHDRLKRARKI). The segment at 151 to 181 (ADDAWAYNAADMDTAVKFFSEAIYKAIESSP) is RNA recognition motif (RRM)-like domain.

The protein belongs to the hrmA family.

The protein localises to the nucleus. Probably modulates the generation of the hypoxia-typic morphotype (called H-MORPH) with altered biofilm architecture that leads to increased host inflammation, rapid disease progression, and mortality in a murine model of invasive aspergillosis. This Aspergillus fumigatus (strain CBS 144.89 / FGSC A1163 / CEA10) (Neosartorya fumigata) protein is Hypoxia responsive morphology factor C.